We begin with the raw amino-acid sequence, 239 residues long: Pimeloyl-[acyl-carrier protein] methyl ester esterase (239 aa).

Substrate contacts are provided by residues tryptophan 20, 77–78, and 138–142; these read SM and FISLQ. The active-site Nucleophile is serine 77. Residues aspartate 192 and histidine 220 contribute to the active site. Residue histidine 220 coordinates substrate.

The protein belongs to the AB hydrolase superfamily. Carboxylesterase BioH family. As to quaternary structure, monomer.

It localises to the cytoplasm. It catalyses the reaction 6-carboxyhexanoyl-[ACP] methyl ester + H2O = 6-carboxyhexanoyl-[ACP] + methanol + H(+). The protein operates within cofactor biosynthesis; biotin biosynthesis. Its function is as follows. The physiological role of BioH is to remove the methyl group introduced by BioC when the pimeloyl moiety is complete. It allows to synthesize pimeloyl-ACP via the fatty acid synthetic pathway through the hydrolysis of the ester bonds of pimeloyl-ACP esters. The sequence is that of Pimeloyl-[acyl-carrier protein] methyl ester esterase from Legionella pneumophila (strain Corby).